The chain runs to 304 residues: Protease HtpX homolog (304 aa).

2 consecutive transmembrane segments (helical) span residues 14–34 and 39–59; these read VFIV…IGII and YLNG…IMVM. Zn(2+) is bound at residue H144. E145 is a catalytic residue. A Zn(2+)-binding site is contributed by H148. 2 consecutive transmembrane segments (helical) span residues 161–181 and 202–222; these read IALV…IFWG and LIIY…ATAI. E231 provides a ligand contact to Zn(2+). Positions 276-295 are disordered; that stretch reads SPLKSKKDKPGIFDSHPPIS.

Belongs to the peptidase M48B family. Requires Zn(2+) as cofactor.

It is found in the cell membrane. The chain is Protease HtpX homolog from Listeria welshimeri serovar 6b (strain ATCC 35897 / DSM 20650 / CCUG 15529 / CIP 8149 / NCTC 11857 / SLCC 5334 / V8).